Reading from the N-terminus, the 252-residue chain is Hydroxyacylglutathione hydrolase (252 aa).

The Zn(2+) site is built by His-54, His-56, Asp-58, His-59, His-111, Asp-128, and His-166.

Belongs to the metallo-beta-lactamase superfamily. Glyoxalase II family. As to quaternary structure, monomer. Requires Zn(2+) as cofactor.

The enzyme catalyses an S-(2-hydroxyacyl)glutathione + H2O = a 2-hydroxy carboxylate + glutathione + H(+). The protein operates within secondary metabolite metabolism; methylglyoxal degradation; (R)-lactate from methylglyoxal: step 2/2. Thiolesterase that catalyzes the hydrolysis of S-D-lactoyl-glutathione to form glutathione and D-lactic acid. The sequence is that of Hydroxyacylglutathione hydrolase from Vibrio cholerae serotype O1 (strain ATCC 39541 / Classical Ogawa 395 / O395).